The chain runs to 455 residues: DNA repair protein RadA (455 aa).

Residues 12–29 (CSECGSYSPKWLGQCPGC) form a C4-type zinc finger. An ATP-binding site is contributed by 95-102 (GEPGIGKS). A RadA KNRFG motif motif is present at residues 252 to 256 (KNRFG). Residues 351 to 455 (DVFLSIAGGL…TIKDAVRLLQ (105 aa)) are lon-protease-like.

It belongs to the RecA family. RadA subfamily.

DNA-dependent ATPase involved in processing of recombination intermediates, plays a role in repairing DNA breaks. Stimulates the branch migration of RecA-mediated strand transfer reactions, allowing the 3' invading strand to extend heteroduplex DNA faster. Binds ssDNA in the presence of ADP but not other nucleotides, has ATPase activity that is stimulated by ssDNA and various branched DNA structures, but inhibited by SSB. Does not have RecA's homology-searching function. The protein is DNA repair protein RadA of Chlamydia muridarum (strain MoPn / Nigg).